The primary structure comprises 458 residues: Vasoactive intestinal polypeptide receptor 1 (458 aa).

The first 31 residues, 1–31 (MRPLSPPPAGWFCVLAGVLACVLGPVGSWAV), serve as a signal peptide directing secretion. The Extracellular portion of the chain corresponds to 32–142 (GLQQEECDYL…DEQQTVFYNS (111 aa)). Disulfide bonds link C38/C209, C51/C73, C64/C106, C87/C123, and C216/C286. Residues N59, N70, N101, and N105 are each glycosylated (N-linked (GlcNAc...) asparagine). A helical transmembrane segment spans residues 143–167 (VKTGYTIGYSLSLAALLVATAILSL). At 168 to 175 (FRKLHCTR) the chain is on the cytoplasmic side. The helical transmembrane segment at 176–197 (NYIHMHLFISFILRATAVFIKD) threads the bilayer. Topologically, residues 198–217 (LALFDSEESDHCSKGSVGCK) are extracellular. Residues 218-242 (AAVVLFQYCVMANFFWLLVEGLYLH) traverse the membrane as a helical segment. Over 243–255 (TLLAVSFFSERKY) the chain is Cytoplasmic. A helical membrane pass occupies residues 256–277 (FWGYIFVGWGVPSTFIMVWTVV). The Extracellular portion of the chain corresponds to 278–292 (RIHFEDYGCWDTIHS). Residues 293–317 (SLWWIIKAPILASILVNFILFIRII) traverse the membrane as a helical segment. Topologically, residues 318 to 339 (GILVQKLRPPDVGKSDNSPYSR) are cytoplasmic. Residues 340–360 (LAKSTLLLIPLFGVHYIMFAF) traverse the membrane as a helical segment. The Extracellular portion of the chain corresponds to 361 to 368 (FPDNFKAE). A helical membrane pass occupies residues 369–392 (VKMVFELIVGSFQGCVVAILYCFL). At 393–458 (NGEVQAELRR…SSFQAEVSLV (66 aa)) the chain is on the cytoplasmic side.

It belongs to the G-protein coupled receptor 2 family. Interacts with ADCYAP1/PACAP; activated by both PACAP27 and PACAP38 neuropeptides. Interacts with VIP; the interaction results in VIPR1 activation.

The protein resides in the cell membrane. Its function is as follows. G protein-coupled receptor activated by the neuropeptides vasoactive intestinal peptide (VIP) and pituitary adenylate cyclase-activating polypeptide (ADCYAP1/PACAP). Binds VIP and both PACAP27 and PACAP38 bioactive peptides with the following order of ligand affinity VIP = PACAP27 &gt; PACAP38. Ligand binding causes a conformation change that triggers signaling via guanine nucleotide-binding proteins (G proteins) and modulates the activity of downstream effectors. Activates cAMP-dependent pathway. This is Vasoactive intestinal polypeptide receptor 1 (VIPR1) from Sus scrofa (Pig).